A 202-amino-acid chain; its full sequence is Large ribosomal subunit protein bL17 (202 aa).

The segment covering 130–142 (AAPAATAPAPVEE) has biased composition (low complexity). The segment at 130-202 (AAPAATAPAP…TEESTEDDKA (73 aa)) is disordered. Acidic residues-rich tracts occupy residues 143 to 168 (APAE…EASP) and 177 to 202 (QPVE…DDKA).

Belongs to the bacterial ribosomal protein bL17 family. As to quaternary structure, part of the 50S ribosomal subunit. Contacts protein L32.

The protein is Large ribosomal subunit protein bL17 of Nocardioides sp. (strain ATCC BAA-499 / JS614).